The primary structure comprises 147 residues: UPF0735 ACT domain-containing protein ABC1543 (147 aa).

In terms of domain architecture, ACT spans 70–145; sequence TFSINLADRS…SVERVELVGS (76 aa).

Belongs to the UPF0735 family.

The chain is UPF0735 ACT domain-containing protein ABC1543 from Shouchella clausii (strain KSM-K16) (Alkalihalobacillus clausii).